The sequence spans 621 residues: Glucose 1,6-bisphosphate synthase (621 aa).

Residues Arg73 and Ser175 each coordinate alpha-D-glucose 1,6-bisphosphate. Ser175 serves as the catalytic Phosphoserine intermediate. Mg(2+)-binding residues include Ser175, Asp332, Asp334, and Asp336. Ser175 is subject to Phosphoserine. Asp336, Arg337, Glu433, Ser435, and Lys447 together coordinate alpha-D-glucose 1,6-bisphosphate.

The protein belongs to the phosphohexose mutase family. As to expression, expressed at highest levels in the brain and testis, at intermediate levels in thymus, spleen, lung and skeletal muscle, and at lowest levels in kidney, liver and heart.

It localises to the cytoplasm. Its subcellular location is the cytosol. The catalysed reaction is (2R)-3-phospho-glyceroyl phosphate + alpha-D-glucose 1-phosphate = alpha-D-glucose 1,6-bisphosphate + (2R)-3-phosphoglycerate + H(+). It carries out the reaction alpha-D-glucose 6-phosphate + (2R)-3-phospho-glyceroyl phosphate = alpha-D-glucose 1,6-bisphosphate + (2R)-3-phosphoglycerate + H(+). The enzyme catalyses (2R)-3-phospho-glyceroyl phosphate + alpha-D-ribose 1-phosphate = alpha-D-ribose 1,5-bisphosphate + (2R)-3-phosphoglycerate + H(+). It catalyses the reaction 2-deoxy-alpha-D-ribose 1-phosphate + (2R)-3-phospho-glyceroyl phosphate = 2-deoxy-alpha-D-ribose 1,5-bisphosphate + (2R)-3-phosphoglycerate + H(+). The catalysed reaction is (2R)-3-phospho-glyceroyl phosphate + alpha-D-mannose 1-phosphate = alpha-D-mannose 1,6-bisphosphate + (2R)-3-phosphoglycerate + H(+). Functionally, glucose 1,6-bisphosphate synthase using 1,3-bisphosphoglycerate as a phosphate donor and a series of 1-phosphate sugars, including glucose 1-phosphate, mannose 1-phosphate, ribose 1-phosphate and deoxyribose 1-phosphate, as acceptors. In vitro, also exhibits very low phosphopentomutase and phosphoglucomutase activity which are most probably not physiologically relevant. The polypeptide is Glucose 1,6-bisphosphate synthase (Mus musculus (Mouse)).